The chain runs to 268 residues: Phosphatidylglycerol--prolipoprotein diacylglyceryl transferase (268 aa).

Helical transmembrane passes span 21–41 (WYGI…GRFA), 54–74 (FAII…VFVL), 93–113 (GLAI…YLPM), 122–142 (ADVV…GNFF), 173–193 (VMHP…GILL), 203–223 (GVVF…IESI), and 236–256 (VAQL…AWFL). Arg-137 is a binding site for a 1,2-diacyl-sn-glycero-3-phospho-(1'-sn-glycerol).

This sequence belongs to the Lgt family.

The protein localises to the cell membrane. It catalyses the reaction L-cysteinyl-[prolipoprotein] + a 1,2-diacyl-sn-glycero-3-phospho-(1'-sn-glycerol) = an S-1,2-diacyl-sn-glyceryl-L-cysteinyl-[prolipoprotein] + sn-glycerol 1-phosphate + H(+). Its pathway is protein modification; lipoprotein biosynthesis (diacylglyceryl transfer). Its function is as follows. Catalyzes the transfer of the diacylglyceryl group from phosphatidylglycerol to the sulfhydryl group of the N-terminal cysteine of a prolipoprotein, the first step in the formation of mature lipoproteins. The chain is Phosphatidylglycerol--prolipoprotein diacylglyceryl transferase from Symbiobacterium thermophilum (strain DSM 24528 / JCM 14929 / IAM 14863 / T).